Here is a 776-residue protein sequence, read N- to C-terminus: Intermediate filament protein ifp-1 (776 aa).

The tract at residues 1–23 is head; it reads MDSANARDCLLHLARAKLSERQD. Residues 20-371 enclose the IF rod domain; it reads ERQDLVQLND…ELLDRSGDPR (352 aa). The tract at residues 24–55 is coil 1A; sequence LVQLNDQFVDIIEHVHYMEAEHTALEHDYNLL. Positions 56 to 69 are linker 1; the sequence is KSGVQSDSSGINEI. Residues 70 to 207 form a coil 1B region; sequence YNVEIRTVRS…EDNKKIIMNE (138 aa). Positions 208 to 224 are linker 12; sequence HKYFVRDRNADRHVFRD. A coil 2 region spans residues 225–620; it reads QLRKAIADIR…QRGPHHSSYH (396 aa). Disordered stretches follow at residues 453–473 and 518–544; these read ASPI…DSRS and NTTQ…SERR. A compositionally biased stretch (polar residues) spans 518–536; that stretch reads NTTQINNPYASRTPTSSVN. The tail stretch occupies residues 621–768; the sequence is AATGSVSNSI…WFVYTSNTEI (148 aa). Residues 653-764 form the LTD domain; sequence NFQRFTRWYK…EVKSWFVYTS (112 aa).

This sequence belongs to the intermediate filament family.

It localises to the cytoplasm. In terms of biological role, cytoplasmic intermediate filaments provide mechanical strength to cells. Not essential protein. The protein is Intermediate filament protein ifp-1 (ifp-1) of Caenorhabditis elegans.